A 283-amino-acid polypeptide reads, in one-letter code: Putative casein kinase II subunit beta-4 (283 aa).

Disordered regions lie at residues methionine 1 to glycine 23 and leucine 35 to aspartate 92. A compositionally biased stretch (gly residues) spans glycine 7 to serine 16. Residues valine 58–serine 70 are compositionally biased toward polar residues.

The protein belongs to the casein kinase 2 subunit beta family. As to quaternary structure, heterotetramer of two catalytic alpha subunits and two regulatory beta subunits. In terms of processing, phosphorylated by alpha subunit.

Its subcellular location is the cytoplasm. The protein resides in the cytosol. Its function is as follows. Plays a complex role in regulating the basal catalytic activity of the alpha subunit. The tetrameric holoenzyme CK2, composed of two alpha and two beta subunits, phosphorylates the transcription factor PIF1 after an exposure to light, resulting in a proteasome-dependent degradation of PIF1 and promotion of photomorphogenesis. CK2 phosphorylates translation initiation factors. May participate in the regulation of the initiation of translation. The protein is Putative casein kinase II subunit beta-4 of Arabidopsis thaliana (Mouse-ear cress).